The chain runs to 448 residues: Phosphoglucosamine mutase (448 aa).

The Phosphoserine intermediate role is filled by Ser-100. Residues Ser-100, Asp-240, Asp-242, and Asp-244 each coordinate Mg(2+). Phosphoserine is present on Ser-100.

The protein belongs to the phosphohexose mutase family. It depends on Mg(2+) as a cofactor. Post-translationally, activated by phosphorylation.

It catalyses the reaction alpha-D-glucosamine 1-phosphate = D-glucosamine 6-phosphate. Its function is as follows. Catalyzes the conversion of glucosamine-6-phosphate to glucosamine-1-phosphate. The protein is Phosphoglucosamine mutase of Bacillus cereus (strain B4264).